Here is a 203-residue protein sequence, read N- to C-terminus: Thymidylate kinase (203 aa).

7–14 (GGEGAGKT) contacts ATP.

It belongs to the thymidylate kinase family.

It catalyses the reaction dTMP + ATP = dTDP + ADP. In terms of biological role, phosphorylation of dTMP to form dTDP in both de novo and salvage pathways of dTTP synthesis. The sequence is that of Thymidylate kinase (tmk) from Chlamydia trachomatis serovar D (strain ATCC VR-885 / DSM 19411 / UW-3/Cx).